Here is a 150-residue protein sequence, read N- to C-terminus: UPF0336 protein SGR_2883 (150 aa).

In terms of domain architecture, MaoC-like spans 10–116 (RTYPPTPAYE…STIEAVKSLA (107 aa)).

This sequence belongs to the UPF0336 family.

The protein is UPF0336 protein SGR_2883 of Streptomyces griseus subsp. griseus (strain JCM 4626 / CBS 651.72 / NBRC 13350 / KCC S-0626 / ISP 5235).